A 1031-amino-acid chain; its full sequence is Error-prone DNA polymerase (1031 aa).

It belongs to the DNA polymerase type-C family. DnaE2 subfamily.

The protein localises to the cytoplasm. The enzyme catalyses DNA(n) + a 2'-deoxyribonucleoside 5'-triphosphate = DNA(n+1) + diphosphate. In terms of biological role, DNA polymerase involved in damage-induced mutagenesis and translesion synthesis (TLS). It is not the major replicative DNA polymerase. This Pseudomonas aeruginosa (strain ATCC 15692 / DSM 22644 / CIP 104116 / JCM 14847 / LMG 12228 / 1C / PRS 101 / PAO1) protein is Error-prone DNA polymerase.